The sequence spans 472 residues: MAGKTLYDKLWDDHVVTQRDDGSCLLYIDRHLLHEVTSPQAFEGLQLAGRQPWRLSANVATPDHNVPTSKKERDQGIAGIEDDTSRIQVQTLDDNCKAFNIVEFGINDIRQGIVHVVGPEQGLTLPGMTVVCGDSHTATHGAFGCLAHGIGTSEVEHVLATQCLVQKKSKNMLVRVDGVLGKGVTPKDVVLAIIGKIGTAGGTGYAIEFGGQVFRDMSIEGRMTVCNMAIEAGARVGMVAVDEKTIEYVKGRSYAPKGEQWDQAVAYWNTLHSDDDAVFDAVVELNGTEIEPQVSWGTSPEMVIPVSKAVPTLEQAKDDVQRNDWTRAYQYMGLNAGQALADIQLDRVFIGSCTNSRIEDIRAAAEVVKGRKVAPSIKQAMIVPGSGLVKQQAEKEGLDKIFLEAGFEWREPGCSMCLAMNADKLQPGEHCASTSNRNFEGRQGNGGRTHLVSPAMAAAAAIAGHFVDVRSF.

Residues Cys-353, Cys-414, and Cys-417 each contribute to the [4Fe-4S] cluster site.

The protein belongs to the aconitase/IPM isomerase family. LeuC type 1 subfamily. As to quaternary structure, heterodimer of LeuC and LeuD. [4Fe-4S] cluster serves as cofactor.

It carries out the reaction (2R,3S)-3-isopropylmalate = (2S)-2-isopropylmalate. It participates in amino-acid biosynthesis; L-leucine biosynthesis; L-leucine from 3-methyl-2-oxobutanoate: step 2/4. In terms of biological role, catalyzes the isomerization between 2-isopropylmalate and 3-isopropylmalate, via the formation of 2-isopropylmaleate. This Acinetobacter baumannii (strain ATCC 17978 / DSM 105126 / CIP 53.77 / LMG 1025 / NCDC KC755 / 5377) protein is 3-isopropylmalate dehydratase large subunit.